A 185-amino-acid polypeptide reads, in one-letter code: Ribosome-recycling factor (185 aa).

Belongs to the RRF family.

The protein localises to the cytoplasm. In terms of biological role, responsible for the release of ribosomes from messenger RNA at the termination of protein biosynthesis. May increase the efficiency of translation by recycling ribosomes from one round of translation to another. The sequence is that of Ribosome-recycling factor from Oceanobacillus iheyensis (strain DSM 14371 / CIP 107618 / JCM 11309 / KCTC 3954 / HTE831).